The following is a 411-amino-acid chain: Meiotic driver wtf33 (411 aa).

A disordered region spans residues 1 to 95 (MKNKYYPLRS…ENHSSGTADN (95 aa)). The segment covering 11–29 (SMDELSTKNDNEIDLEKGP) has biased composition (basic and acidic residues). Residues 57-72 (GANNPNLFNTDESTTP) are compositionally biased toward polar residues. The next 6 helical transmembrane spans lie at 104–124 (AILS…YLTY), 137–157 (WVYF…LWCF), 244–264 (EMMI…FGCV), 281–301 (TISA…WTLW), 303–323 (ALSG…LVNG), and 336–356 (GYEI…LYEM).

The protein belongs to the WTF family. Homomer. Forms protein aggregates. The two isoforms can interact with each other and with themselves. High sequence similarity is required for their interaction.

It localises to the spore membrane. The protein resides in the vacuole membrane. The protein localises to the ascus epiplasm. It is found in the cytoplasm. Its subcellular location is the endoplasmic reticulum membrane. Functionally, promotes unequal transmission of alleles from the parental zygote to progeny spores by acting as poison/antidote system where the poison and antidote proteins are produced from the same locus; the poison component is trans-acting and targets all spores within an ascus whereas the antidote component is spore-specific, leading to poisoning of all progeny that do not inherit the allele. Localizes isoform 2 to the vacuole thereby facilitating its degradation. Its function is as follows. Forms toxic aggregates that disrupt spore maturation. The chain is Meiotic driver wtf33 from Schizosaccharomyces kambucha (Fission yeast).